The chain runs to 365 residues: 2-aminoethylphosphonate--pyruvate transaminase (365 aa).

Lys-194 carries the post-translational modification N6-(pyridoxal phosphate)lysine.

Belongs to the class-V pyridoxal-phosphate-dependent aminotransferase family. PhnW subfamily. As to quaternary structure, homodimer. Pyridoxal 5'-phosphate is required as a cofactor.

The enzyme catalyses (2-aminoethyl)phosphonate + pyruvate = phosphonoacetaldehyde + L-alanine. In terms of biological role, involved in phosphonate degradation. The sequence is that of 2-aminoethylphosphonate--pyruvate transaminase from Bacillus cereus (strain ZK / E33L).